The sequence spans 1370 residues: DNA-directed RNA polymerase subunit beta (1370 aa).

Belongs to the RNA polymerase beta chain family. As to quaternary structure, the RNAP catalytic core consists of 2 alpha, 1 beta, 1 beta' and 1 omega subunit. When a sigma factor is associated with the core the holoenzyme is formed, which can initiate transcription.

The enzyme catalyses RNA(n) + a ribonucleoside 5'-triphosphate = RNA(n+1) + diphosphate. Functionally, DNA-dependent RNA polymerase catalyzes the transcription of DNA into RNA using the four ribonucleoside triphosphates as substrates. The sequence is that of DNA-directed RNA polymerase subunit beta from Syntrophobacter fumaroxidans (strain DSM 10017 / MPOB).